Consider the following 352-residue polypeptide: tRNA-specific 2-thiouridylase MnmA (352 aa).

ATP-binding positions include 7–14 (GLSGGVDS) and leucine 33. Cysteine 94 acts as the Nucleophile in catalysis. Cysteine 94 and cysteine 193 are oxidised to a cystine. Glycine 119 contacts ATP. Positions 143–145 (KDQ) are interaction with tRNA. Cysteine 193 acts as the Cysteine persulfide intermediate in catalysis. The tract at residues 298–299 (RY) is interaction with tRNA.

The protein belongs to the MnmA/TRMU family.

It is found in the cytoplasm. The catalysed reaction is S-sulfanyl-L-cysteinyl-[protein] + uridine(34) in tRNA + AH2 + ATP = 2-thiouridine(34) in tRNA + L-cysteinyl-[protein] + A + AMP + diphosphate + H(+). Functionally, catalyzes the 2-thiolation of uridine at the wobble position (U34) of tRNA, leading to the formation of s(2)U34. This Nostoc sp. (strain PCC 7120 / SAG 25.82 / UTEX 2576) protein is tRNA-specific 2-thiouridylase MnmA.